Here is a 66-residue protein sequence, read N- to C-terminus: Cytochrome c oxidase polypeptide VIII, mitochondrial (66 aa).

A mitochondrion-targeting transit peptide spans 1–17 (MLRYSLQARSALRGVRF). At 18–38 (SSSHSAPKPGSTIPFYINKKP) the chain is on the mitochondrial matrix side. The helical transmembrane segment at 39-59 (LPTLLYFGTFGVIFSIPFIVV) threads the bilayer. The Mitochondrial intermembrane segment spans residues 60 to 66 (KYHNRNL).

It belongs to the cytochrome c oxidase VIIc family. Component of the cytochrome c oxidase (complex IV, CIV), a multisubunit enzyme composed of a catalytic core of 3 subunits and several supernumerary subunits. The complex exists as a monomer or a dimer and forms supercomplexes (SCs) in the inner mitochondrial membrane with ubiquinol-cytochrome c oxidoreductase (cytochrome b-c1 complex, complex III, CIII).

The protein localises to the mitochondrion inner membrane. It participates in energy metabolism; oxidative phosphorylation. In terms of biological role, component of the cytochrome c oxidase, the last enzyme in the mitochondrial electron transport chain which drives oxidative phosphorylation. The respiratory chain contains 3 multisubunit complexes succinate dehydrogenase (complex II, CII), ubiquinol-cytochrome c oxidoreductase (cytochrome b-c1 complex, complex III, CIII) and cytochrome c oxidase (complex IV, CIV), that cooperate to transfer electrons derived from NADH and succinate to molecular oxygen, creating an electrochemical gradient over the inner membrane that drives transmembrane transport and the ATP synthase. Cytochrome c oxidase is the component of the respiratory chain that catalyzes the reduction of oxygen to water. Electrons originating from reduced cytochrome c in the intermembrane space (IMS) are transferred via the dinuclear copper A center (CU(A)) of subunit 2 and heme A of subunit 1 to the active site in subunit 1, a binuclear center (BNC) formed by heme A3 and copper B (CU(B)). The BNC reduces molecular oxygen to 2 water molecules using 4 electrons from cytochrome c in the IMS and 4 protons from the mitochondrial matrix. The protein is Cytochrome c oxidase polypeptide VIII, mitochondrial (cox8) of Schizosaccharomyces pombe (strain 972 / ATCC 24843) (Fission yeast).